We begin with the raw amino-acid sequence, 429 residues long: Nucleotide exchange factor Sil1 (429 aa).

A signal peptide spans M1–A24. An N-linked (GlcNAc...) asparagine glycan is attached at N29. Positions D70–A98 are disordered. Over residues G75–D84 the composition is skewed to polar residues. Over residues Q85–N94 the composition is skewed to basic and acidic residues. The stretch at D104–R135 forms a coiled coil. N150, N199, and N400 each carry an N-linked (GlcNAc...) asparagine glycan. Positions H426 to L429 match the Prevents secretion from ER motif.

This sequence belongs to the SIL1 family.

The protein resides in the endoplasmic reticulum lumen. In terms of biological role, required for protein translocation and folding in the endoplasmic reticulum (ER). Functions as a nucleotide exchange factor for an ER lumenal chaperone of HSP70 family. This Drosophila melanogaster (Fruit fly) protein is Nucleotide exchange factor Sil1.